The sequence spans 299 residues: Phosphatidylcholine-sterol acyltransferase (299 aa).

N28 and N184 each carry an N-linked (GlcNAc...) asparagine glycan. Residues C225 and C268 are joined by a disulfide bond. D257 acts as the Charge relay system in catalysis. The N-linked (GlcNAc...) asparagine glycan is linked to N285. The Charge relay system role is filled by H289. N296 carries N-linked (GlcNAc...) asparagine glycosylation.

Belongs to the AB hydrolase superfamily. Lipase family.

The protein localises to the secreted. It catalyses the reaction a sterol + a 1,2-diacyl-sn-glycero-3-phosphocholine = a sterol ester + a 1-acyl-sn-glycero-3-phosphocholine. With respect to regulation, APOA1 is the most potent activator in plasma. Also activated by APOE, APOC1 and APOA4. Its function is as follows. Central enzyme in the extracellular metabolism of plasma lipoproteins. Synthesized mainly in the liver and secreted into plasma where it converts cholesterol and phosphatidylcholines (lecithins) to cholesteryl esters and lysophosphatidylcholines on the surface of high and low density lipoproteins (HDLs and LDLs). The cholesterol ester is then transported back to the liver. Has a preference for plasma 16:0-18:2 or 18:O-18:2 phosphatidylcholines. Also produced in the brain by primary astrocytes, and esterifies free cholesterol on nascent APOE-containing lipoproteins secreted from glia and influences cerebral spinal fluid (CSF) APOE- and APOA1 levels. Together with APOE and the cholesterol transporter ABCA1, plays a key role in the maturation of glial-derived, nascent lipoproteins. Required for remodeling high-density lipoprotein particles into their spherical forms. The polypeptide is Phosphatidylcholine-sterol acyltransferase (LCAT) (Micromys minutus (European harvest mouse)).